Reading from the N-terminus, the 319-residue chain is Acetyl esterase (319 aa).

Positions 91–93 (HGG) match the Involved in the stabilization of the negatively charged intermediate by the formation of the oxyanion hole motif. Active-site residues include Ser165, Asp262, and His292.

Belongs to the 'GDXG' lipolytic enzyme family. As to quaternary structure, homodimer. Interacts with MalT and MelA.

The protein resides in the cytoplasm. Functionally, displays esterase activity towards short chain fatty esters (acyl chain length of up to 8 carbons). Able to hydrolyze triacetylglycerol (triacetin) and tributyrylglycerol (tributyrin), but not trioleylglycerol (triolein) or cholesterol oleate. Negatively regulates MalT activity by antagonizing maltotriose binding. Inhibits MelA galactosidase activity. This Escherichia coli (strain 55989 / EAEC) protein is Acetyl esterase.